Consider the following 504-residue polypeptide: 5-epiaristolochene 1,3-dihydroxylase (504 aa).

A helical transmembrane segment spans residues 2 to 22 (QFFSLVSIFLFLSFLFLLRKW). Position 442 (C442) interacts with heme.

It belongs to the cytochrome P450 family. Heme serves as cofactor.

It localises to the membrane. It catalyses the reaction (+)-5-epi-aristolochene + 2 reduced [NADPH--hemoprotein reductase] + 2 O2 = capsidiol + 2 oxidized [NADPH--hemoprotein reductase] + 2 H2O + 2 H(+). With respect to regulation, inhibited by ancymidol and ketoconazole. In terms of biological role, involved in the biosynthesis of capsidiol. Catalyzes the successive and independent hydroxylations at the C1 and C3 positions of 5-epiaristolochene. The second hydroxylation step is 8-fold more efficient than the first hydroxylation reaction. Capable of utilizing premnaspirodiene as a substrate. In Nicotiana tabacum (Common tobacco), this protein is 5-epiaristolochene 1,3-dihydroxylase (CYP71D20).